Here is a 1073-residue protein sequence, read N- to C-terminus: ATP-dependent helicase/deoxyribonuclease subunit B (1073 aa).

This sequence belongs to the helicase family. AddB/RexB type 2 subfamily. In terms of assembly, heterodimer of AddA and RexB. It depends on Mg(2+) as a cofactor.

Functionally, the heterodimer acts as both an ATP-dependent DNA helicase and an ATP-dependent, dual-direction single-stranded exonuclease. Recognizes the chi site generating a DNA molecule suitable for the initiation of homologous recombination. This subunit has 5' -&gt; 3' nuclease activity but not helicase activity. The protein is ATP-dependent helicase/deoxyribonuclease subunit B of Streptococcus equi subsp. zooepidemicus (strain MGCS10565).